Consider the following 134-residue polypeptide: Probable glycine cleavage system H protein (134 aa).

Residues 29–110 (TVLVGISDYA…PYENWIAKLK (82 aa)) enclose the Lipoyl-binding domain. The residue at position 70 (Lys70) is an N6-lipoyllysine.

Belongs to the GcvH family. As to quaternary structure, the glycine cleavage system is composed of four proteins: P, T, L and H. It depends on (R)-lipoate as a cofactor.

The glycine cleavage system catalyzes the degradation of glycine. The H protein shuttles the methylamine group of glycine from the P protein to the T protein. The sequence is that of Probable glycine cleavage system H protein from Thermococcus kodakarensis (strain ATCC BAA-918 / JCM 12380 / KOD1) (Pyrococcus kodakaraensis (strain KOD1)).